The sequence spans 442 residues: tRNA modification GTPase MnmE (442 aa).

The (6S)-5-formyl-5,6,7,8-tetrahydrofolate site is built by R23, E82, and K121. The region spanning 217 to 363 (PFKIAIIGET…LVDLLTKYIN (147 aa)) is the TrmE-type G domain. N227 provides a ligand contact to K(+). GTP-binding positions include 227–232 (NVGKSS), 246–252 (SNIKGST), and 271–274 (DTAG). S231 contacts Mg(2+). Residues S246, I248, and S251 each contribute to the K(+) site. T252 provides a ligand contact to Mg(2+). K442 contributes to the (6S)-5-formyl-5,6,7,8-tetrahydrofolate binding site.

The protein belongs to the TRAFAC class TrmE-Era-EngA-EngB-Septin-like GTPase superfamily. TrmE GTPase family. Homodimer. Heterotetramer of two MnmE and two MnmG subunits. K(+) is required as a cofactor.

The protein resides in the cytoplasm. In terms of biological role, exhibits a very high intrinsic GTPase hydrolysis rate. Involved in the addition of a carboxymethylaminomethyl (cmnm) group at the wobble position (U34) of certain tRNAs, forming tRNA-cmnm(5)s(2)U34. In Mycoplasma genitalium (strain ATCC 33530 / DSM 19775 / NCTC 10195 / G37) (Mycoplasmoides genitalium), this protein is tRNA modification GTPase MnmE.